The primary structure comprises 690 residues: Elongation factor G (690 aa).

Positions 8–283 (EDYRNFGIMA…AVVDYLPSPV (276 aa)) constitute a tr-type G domain. Residues 17–24 (AHIDAGKT), 81–85 (DTPGH), and 135–138 (NKMD) contribute to the GTP site.

It belongs to the TRAFAC class translation factor GTPase superfamily. Classic translation factor GTPase family. EF-G/EF-2 subfamily.

The protein resides in the cytoplasm. Catalyzes the GTP-dependent ribosomal translocation step during translation elongation. During this step, the ribosome changes from the pre-translocational (PRE) to the post-translocational (POST) state as the newly formed A-site-bound peptidyl-tRNA and P-site-bound deacylated tRNA move to the P and E sites, respectively. Catalyzes the coordinated movement of the two tRNA molecules, the mRNA and conformational changes in the ribosome. The chain is Elongation factor G from Rhodopseudomonas palustris (strain BisB5).